We begin with the raw amino-acid sequence, 119 residues long: NAD(P)H-quinone oxidoreductase subunit M (119 aa).

It belongs to the complex I NdhM subunit family. NDH-1 can be composed of about 15 different subunits; different subcomplexes with different compositions have been identified which probably have different functions.

Its subcellular location is the cell inner membrane. The catalysed reaction is a plastoquinone + NADH + (n+1) H(+)(in) = a plastoquinol + NAD(+) + n H(+)(out). It carries out the reaction a plastoquinone + NADPH + (n+1) H(+)(in) = a plastoquinol + NADP(+) + n H(+)(out). In terms of biological role, NDH-1 shuttles electrons from an unknown electron donor, via FMN and iron-sulfur (Fe-S) centers, to quinones in the respiratory and/or the photosynthetic chain. The immediate electron acceptor for the enzyme in this species is believed to be plastoquinone. Couples the redox reaction to proton translocation, and thus conserves the redox energy in a proton gradient. Cyanobacterial NDH-1 also plays a role in inorganic carbon-concentration. The protein is NAD(P)H-quinone oxidoreductase subunit M of Gloeobacter violaceus (strain ATCC 29082 / PCC 7421).